The sequence spans 194 residues: dTTP/UTP pyrophosphatase (194 aa).

Asp-66 serves as the catalytic Proton acceptor.

Belongs to the Maf family. YhdE subfamily. It depends on a divalent metal cation as a cofactor.

Its subcellular location is the cytoplasm. It carries out the reaction dTTP + H2O = dTMP + diphosphate + H(+). The enzyme catalyses UTP + H2O = UMP + diphosphate + H(+). Nucleoside triphosphate pyrophosphatase that hydrolyzes dTTP and UTP. May have a dual role in cell division arrest and in preventing the incorporation of modified nucleotides into cellular nucleic acids. The sequence is that of dTTP/UTP pyrophosphatase from Anaeromyxobacter dehalogenans (strain 2CP-C).